The chain runs to 132 residues: ATP synthase epsilon chain (132 aa).

Belongs to the ATPase epsilon chain family. In terms of assembly, F-type ATPases have 2 components, CF(1) - the catalytic core - and CF(0) - the membrane proton channel. CF(1) has five subunits: alpha(3), beta(3), gamma(1), delta(1), epsilon(1). CF(0) has three main subunits: a, b and c.

The protein localises to the cell inner membrane. In terms of biological role, produces ATP from ADP in the presence of a proton gradient across the membrane. This is ATP synthase epsilon chain from Gloeobacter violaceus (strain ATCC 29082 / PCC 7421).